Here is a 492-residue protein sequence, read N- to C-terminus: Virion host shutoff protein (492 aa).

Disordered regions lie at residues 110-130 (EEASDVDASPPPSPITDSRPS), 288-307 (SQARRAARRERANSRSLESM), and 334-371 (EDDYEEDPPLQPPDVAGGPRDGARSSSSEILTPPELVQ).

It belongs to the herpesviridae VHS protein family. In terms of assembly, interacts with human EIF4H, EIF4A1 and EIF4A2; interaction with eIF4AI and EIF4A2 presumably allows Vhs protein to associate with the eIF4F cap-binding complex.

It localises to the virion. Minor structural protein that acts as an endoribonuclease during lytic infection. Degrades host mRNAs in the cytoplasm by cutting them at preferred sites, including some in regions of translation initiation. Together with inhibition of host splicing by ICP27, contributes to an overall decrease in host protein synthesis. Also, after the onset of viral transcription, accelerates the turnover of viral mRNA, thereby facilitating the sequential expression of different classes of viral genes. Binds translation initiation factors eIF4H, eIF4AI, and eIF4AII, thereby may interact directly with the translation initiation complex and thus digest specifically mRNAs. Also impedes antigen presentation by major histocompatibility complex class I and class II molecules, inhibits secretion of cytokines that would otherwise recruit lymphocytes and neutrophils cells to the site of infection and blocks the activation of dendritic cells. Impedes the alpha/beta interferon-mediated response to infection. Inhibits the integrated stress response (ISR) in the infected cell, this function requires the endonuclease activity. Stress granule formation is thus inhibited, which allows protein synthesis and viral replication. The sequence is that of Virion host shutoff protein (UL41) from Homo sapiens (Human).